Reading from the N-terminus, the 375-residue chain is MISITSAEVGMKINEWHRHIQKFNVTDAEMLKAEIERDIEVMEEDQDLLIYYQLMAFRHKIMLEYTLPSDENRMELSEYLNKIEGHKKKLDNMRAYYYNFFRGMYEFRNGEYTRAITYYKKAERKIPTISDKIEKAEFYFKLSEVYYHMKMTHISMHYAELSYNIYKKHELYSVRRIQCHFVIAGNYDDLENHEKALPHLQEALKGAELLKSKNTHIYATAFFNLGNCYHKMDNLNKAARYIEQALVQYRKINSDVLPQAYHDLALIYFKQGKKEQAMDCFRKGIRSAVDFKDELFMNLFEALDVLYIRNGDTPKLLNIFSRLENGKGYPYLEELALLGGNLFDYNGKIEDSIICFKKMVYAQKQISKGECMYEI.

The stretch at 24–95 (NVTDAEMLKA…HKKKLDNMRA (72 aa)) forms a coiled coil. 6 TPR repeats span residues 96–129 (YYYN…IPTI), 177–210 (IQCH…AELL), 219–252 (ATAF…YRKI), 258–291 (PQAY…AVDF), 297–330 (MNLF…KGYP), and 333–366 (EELA…QKQI).

Belongs to the Rap family.

The protein resides in the cytoplasm. With respect to regulation, phosphatase activity is inhibited by the phosphatase regulator PhrE. Its function is as follows. Involved in the regulation of sporulation. Acts as a phosphatase that specifically dephosphorylates the sporulation initiation phosphotransferase Spo0F and inhibits its activity. Probably plays a dispensable role in the overall context of sporulation initiation. This Bacillus subtilis (strain 168) protein is Response regulator aspartate phosphatase E (rapE).